Consider the following 183-residue polypeptide: Protein Dr1 (183 aa).

The Histone-fold domain occupies 19-82 (TLPRASINKI…INAEHVLEAL (64 aa)). The repression of TATA-containing promoters stretch occupies residues 92–183 (QEAEAVLHDC…DDDDDDDDDY (92 aa)). Residues 155–183 (AMVQRPPLADGSVASKPSEDDDDDDDDDY) are disordered. The segment covering 173–183 (EDDDDDDDDDY) has biased composition (acidic residues).

This sequence belongs to the NC2 beta/DR1 family. Component of the Ada2a-containing (ATAC) complex composed of at least Ada2a, Atac1, Hcf, Ada3, Gcn5, Mocs2B, Charac-14, Atac3, Atac2, NC2beta and wds. Homodimer. Interacts with NC2-alpha/Drap1 to form the dNC2 complex.

The protein localises to the nucleus. In terms of biological role, bifunctional basic transcription factor. Activates transcription of DPE (Downstream Promoter Element) containing promoters while repressing transcription of promoters which contain TATA elements. Together with Chrac-14, promotes nucleosome sliding of ATP-dependent nucleosome remodeling complexes. This chain is Protein Dr1 (NC2beta), found in Drosophila melanogaster (Fruit fly).